The primary structure comprises 497 residues: Probable cytosol aminopeptidase (497 aa).

Residues K267 and D272 each contribute to the Mn(2+) site. K279 is an active-site residue. 3 residues coordinate Mn(2+): D290, D349, and E351. The active site involves R353.

Belongs to the peptidase M17 family. Requires Mn(2+) as cofactor.

The protein resides in the cytoplasm. It carries out the reaction Release of an N-terminal amino acid, Xaa-|-Yaa-, in which Xaa is preferably Leu, but may be other amino acids including Pro although not Arg or Lys, and Yaa may be Pro. Amino acid amides and methyl esters are also readily hydrolyzed, but rates on arylamides are exceedingly low.. The catalysed reaction is Release of an N-terminal amino acid, preferentially leucine, but not glutamic or aspartic acids.. Its function is as follows. Presumably involved in the processing and regular turnover of intracellular proteins. Catalyzes the removal of unsubstituted N-terminal amino acids from various peptides. This chain is Probable cytosol aminopeptidase, found in Pseudomonas putida (strain W619).